A 128-amino-acid polypeptide reads, in one-letter code: Azurin (128 aa).

The 128-residue stretch at 1-128 folds into the Plastocyanin-like domain; it reads AECKVTVDST…SMMKGTVTLK (128 aa). A disulfide bond links Cys-3 and Cys-26. Cu cation-binding residues include His-46, Cys-112, His-117, and Met-121.

The protein resides in the periplasm. Its function is as follows. Transfers electrons from cytochrome c551 to cytochrome oxidase. The polypeptide is Azurin (Pseudomonas putida (Arthrobacter siderocapsulatus)).